Reading from the N-terminus, the 382-residue chain is SOX domain-containing protein dichaete (382 aa).

2 disordered regions span residues 53-142 (GGSP…EGHI) and 346-382 (YPSSSTSSPGSSPGTITPNGMDGSMDSALRRPVPVLY). The segment covering 60–69 (AGQGVNGSSG) has biased composition (gly residues). Low complexity predominate over residues 96-123 (NSSIGSAGSLGSQSSLGSNGSGLNSSSG). Positions 142-210 (IKRPMNAFMV…LHMKEHPDYK (69 aa)) form a DNA-binding region, HMG box. The span at 347 to 360 (PSSSTSSPGSSPGT) shows a compositional bias: low complexity.

Initially expressed in a pair-rule-like pattern which is rapidly replaced by strong neuroectoderm expression.

The protein resides in the nucleus. Its function is as follows. Essential for segmentation and CNS development. May modulate the actions of other transcription factors, including gap and pair-rule proteins. This Drosophila melanogaster (Fruit fly) protein is SOX domain-containing protein dichaete (D).